Consider the following 100-residue polypeptide: Protein Vpr (100 aa).

The interval 1–42 is homooligomerization; the sequence is MEQALENQGPAREPFNEWTLELLEELKEEAVRHFPRPWLQAC. A phosphoserine; by host mark is found at S79, S98, and S100.

Belongs to the HIV-1 VPR protein family. In terms of assembly, homooligomer, may form homodimer. Interacts with p6-gag region of the Pr55 Gag precursor protein through a (Leu-X-X)4 motif near the C-terminus of the P6gag protein. Interacts with host UNG. May interact with host RAD23A/HHR23A. Interacts with host VPRBP/DCAF1, leading to hijack the CUL4A-RBX1-DDB1-DCAF1/VPRBP complex, mediating ubiquitination of host proteins such as TERT and ZGPAT and arrest of the cell cycle in G2 phase. In terms of processing, phosphorylated on several residues by host. These phosphorylations regulate VPR activity for the nuclear import of the HIV-1 pre-integration complex.

It is found in the virion. Its subcellular location is the host nucleus. It localises to the host extracellular space. In terms of biological role, during virus replication, may deplete host UNG protein, and incude G2-M cell cycle arrest. Acts by targeting specific host proteins for degradation by the 26S proteasome, through association with the cellular CUL4A-DDB1 E3 ligase complex by direct interaction with host VPRPB/DCAF-1. Cell cycle arrest reportedly occurs within hours of infection and is not blocked by antiviral agents, suggesting that it is initiated by the VPR carried into the virion. Additionally, VPR induces apoptosis in a cell cycle dependent manner suggesting that these two effects are mechanistically linked. Detected in the serum and cerebrospinal fluid of AIDS patient, VPR may also induce cell death to bystander cells. Functionally, during virus entry, plays a role in the transport of the viral pre-integration (PIC) complex to the host nucleus. This function is crucial for viral infection of non-dividing macrophages. May act directly at the nuclear pore complex, by binding nucleoporins phenylalanine-glycine (FG)-repeat regions. In Human immunodeficiency virus type 1 group O (isolate MVP5180) (HIV-1), this protein is Protein Vpr.